The primary structure comprises 432 residues: 3-oxo-tetronate kinase (432 aa).

Residues His155, Ser272, Ala324, Gly344, Glu348, 370-373 (GGET), and Gly414 contribute to the ATP site.

The protein belongs to the four-carbon acid sugar kinase family.

It catalyses the reaction 3-dehydro-L-erythronate + ATP = 3-dehydro-4-O-phospho-L-erythronate + ADP + H(+). It carries out the reaction 3-dehydro-D-erythronate + ATP = 3-dehydro-4-O-phospho-D-erythronate + ADP + H(+). In terms of biological role, catalyzes the ATP-dependent phosphorylation of 3-oxo-tetronate to 3-oxo-tetronate 4-phosphate. This is 3-oxo-tetronate kinase from Cupriavidus necator (strain ATCC 17699 / DSM 428 / KCTC 22496 / NCIMB 10442 / H16 / Stanier 337) (Ralstonia eutropha).